Reading from the N-terminus, the 176-residue chain is Heme oxygenase HutZ (176 aa).

H170 lines the heme pocket.

Belongs to the heme oxygenase HugZ/HutZ family. In terms of assembly, homodimer. Interacts with HutX, leading to the transfer of the heme from HutX to apo-HutZ.

It carries out the reaction heme b + 3 AH2 + 3 O2 + 2 H(+) = biliverdin IXbeta + CO + Fe(2+) + 3 A + 3 H2O. It catalyses the reaction heme b + 3 AH2 + 3 O2 + 3 H(+) = biliverdin IXdelta + CO + Fe(2+) + 3 A + 3 H2O. With respect to regulation, activity is pH-dependent. A proximal hydrogen bond between Asp-132 and the heme axial ligant His-170 is essential for heme degradation activity. Heme-degradation reaction is inhibited by iron chelators. Its function is as follows. Involved in heme degradation. Catalyzes the degradation of heme to biliverdin, with the release of iron. Forms biliverdin beta and delta. Binds heme with high efficiency. This Vibrio cholerae serotype O1 (strain ATCC 39315 / El Tor Inaba N16961) protein is Heme oxygenase HutZ.